The chain runs to 314 residues: tRNA dimethylallyltransferase 1 (314 aa).

8-15 (GPTGSGKS) is a binding site for ATP. Substrate is bound at residue 10-15 (TGSGKS).

This sequence belongs to the IPP transferase family. As to quaternary structure, monomer. Mg(2+) is required as a cofactor.

The catalysed reaction is adenosine(37) in tRNA + dimethylallyl diphosphate = N(6)-dimethylallyladenosine(37) in tRNA + diphosphate. In terms of biological role, catalyzes the transfer of a dimethylallyl group onto the adenine at position 37 in tRNAs that read codons beginning with uridine, leading to the formation of N6-(dimethylallyl)adenosine (i(6)A). This chain is tRNA dimethylallyltransferase 1, found in Mycobacterium ulcerans (strain Agy99).